The following is a 745-amino-acid chain: Single-minded homolog 1-A (745 aa).

One can recognise a bHLH domain in the interval 1-53 (MKEKSKNAGRTRREKENSEFYELAKLLPLPSAITSQSDKASIIRLTTSYLKMR). 2 PAS domains span residues 77 to 147 (GREL…QPYH) and 218 to 288 (PPSA…LVKG). The 410-residue stretch at 336–745 (EYKGLQLSLD…GTSVIITNGS (410 aa)) folds into the Single-minded C-terminal domain. The segment covering 350-364 (TKPSFTYNSPSNPVT) has biased composition (polar residues). Disordered regions lie at residues 350-413 (TKPS…LTDS) and 529-563 (EDSA…EPSK). Positions 368 to 387 (RVGKSRVSRTKTKTRLSPYS) match the Nuclear localization signal motif. The span at 369 to 381 (VGKSRVSRTKTKT) shows a compositional bias: basic residues. The span at 532–544 (AVSSAPDGGSASD) shows a compositional bias: low complexity.

In terms of assembly, efficient DNA binding requires dimerization with another bHLH protein. Heterodimer of sim1a and arnt. Expressed in embryonic forebrain at the eleven somite stage. Detected in brain throughout embryonic development.

Its subcellular location is the nucleus. In terms of biological role, transcriptional factor that may have pleiotropic effects during embryogenesis and in the adult. The sequence is that of Single-minded homolog 1-A (sim1a) from Danio rerio (Zebrafish).